The following is a 286-amino-acid chain: ATP synthase gamma chain (286 aa).

Belongs to the ATPase gamma chain family. As to quaternary structure, F-type ATPases have 2 components, CF(1) - the catalytic core - and CF(0) - the membrane proton channel. CF(1) has five subunits: alpha(3), beta(3), gamma(1), delta(1), epsilon(1). CF(0) has three main subunits: a, b and c.

Its subcellular location is the cell inner membrane. Its function is as follows. Produces ATP from ADP in the presence of a proton gradient across the membrane. The gamma chain is believed to be important in regulating ATPase activity and the flow of protons through the CF(0) complex. The sequence is that of ATP synthase gamma chain from Christiangramia forsetii (strain DSM 17595 / CGMCC 1.15422 / KT0803) (Gramella forsetii).